The chain runs to 276 residues: Replication protein A 32 kDa subunit-A (276 aa).

Positions 19 to 31 are enriched in gly residues; the sequence is GGGGYMQSPGGFG. The tract at residues 19–47 is disordered; the sequence is GGGGYMQSPGGFGSPAPTQGEKKSRSRSQ. Positions 77–151 form a DNA-binding region, OB; that stretch reads VTIVGIVRHA…KSVVAFKIAP (75 aa).

The protein belongs to the replication factor A protein 2 family. Component of the replication protein A complex (RPA/RP-A), a heterotrimeric complex composed of RPA1, RPA2 and RPA3. In terms of processing, differentially phosphorylated throughout the cell cycle, becoming phosphorylated at the G1-S transition and dephosphorylated in late mitosis. Phosphorylation increases upon replication fork stalling.

It is found in the nucleus. The protein resides in the PML body. Functionally, as part of the heterotrimeric replication protein A complex (RPA/RP-A), binds and stabilizes single-stranded DNA intermediates, that form during DNA replication or upon DNA stress. It prevents their reannealing and in parallel, recruits and activates different proteins and complexes involved in DNA metabolism. Thereby, it plays an essential role both in DNA replication and the cellular response to DNA damage. The protein is Replication protein A 32 kDa subunit-A (rpa2-a) of Xenopus laevis (African clawed frog).